A 70-amino-acid chain; its full sequence is V-type proton ATPase subunit e1 (70 aa).

2 helical membrane-spanning segments follow: residues 1-21 (MGFL…SLCV) and 36-56 (LTLV…VYIA).

It belongs to the V-ATPase e1/e2 subunit family. As to quaternary structure, V-ATPase is a heteromultimeric enzyme composed of a peripheral catalytic V1 complex (components A to H) attached to an integral membrane V0 proton pore complex (components: a, c, c'', d and e).

It localises to the golgi apparatus. It is found in the trans-Golgi network membrane. Functionally, subunit of the integral membrane V0 complex of vacuolar ATPase. V-ATPase is responsible for acidifying a variety of intracellular compartments in eukaryotic cells. The polypeptide is V-type proton ATPase subunit e1 (VHA-e1) (Arabidopsis thaliana (Mouse-ear cress)).